The following is a 181-amino-acid chain: Probable integrase/recombinase YoeC (181 aa).

Residues 3–176 enclose the Tyr recombinase domain; the sequence is IVQPIRSLEK…DEDTTRAAYK (174 aa). Residues Arg-40, Lys-64, His-128, Arg-131, and His-154 contribute to the active site. Catalysis depends on Tyr-163, which acts as the O-(3'-phospho-DNA)-tyrosine intermediate.

The protein belongs to the 'phage' integrase family.

The chain is Probable integrase/recombinase YoeC (yoeC) from Bacillus subtilis (strain 168).